Here is a 326-residue protein sequence, read N- to C-terminus: MPHSVSAFQAAYIGIEVLIALVSVPGNVLVIWAVKVNQALRDATFCFIASLAVADVAVGALVIPLAILINIGPQTYFHTCLMVACPVLILTQSSILALLAIAVDRYLRVKIPLRYKTVVTPRRAAVAIAGCWILSLVVGLTPMFGWNNLSKIEMAWAANGSVGEPVIKCEFEKVISMEYMVYFNFFVWVLPPLLLMVLIYLEVFYLIRKQLSKKVSASSGDPQKYYGKELKIAKSLALILFLFALSWLPLHILNCITLFCPTCHKPTILTYIAIFLTHGNSAMNPIVYAFRIQKFRVTFLKIWNDHFRCQPEPPIDEDLPEEKVDD.

The Extracellular segment spans residues 1 to 10; that stretch reads MPHSVSAFQA. Residues 11-33 traverse the membrane as a helical segment; it reads AYIGIEVLIALVSVPGNVLVIWA. The Cytoplasmic segment spans residues 34–46; the sequence is VKVNQALRDATFC. The helical transmembrane segment at 47-69 threads the bilayer; that stretch reads FIASLAVADVAVGALVIPLAILI. Residues 70–80 lie on the Extracellular side of the membrane; it reads NIGPQTYFHTC. Cysteines 80 and 169 form a disulfide. Residues 81–102 form a helical membrane-spanning segment; that stretch reads LMVACPVLILTQSSILALLAIA. Over 103–123 the chain is Cytoplasmic; the sequence is VDRYLRVKIPLRYKTVVTPRR. The chain crosses the membrane as a helical span at residues 124–146; that stretch reads AAVAIAGCWILSLVVGLTPMFGW. The Extracellular segment spans residues 147–176; that stretch reads NNLSKIEMAWAANGSVGEPVIKCEFEKVIS. An N-linked (GlcNAc...) asparagine glycan is attached at Asn-159. The chain crosses the membrane as a helical span at residues 177–201; that stretch reads MEYMVYFNFFVWVLPPLLLMVLIYL. Residues 202-235 are Cytoplasmic-facing; the sequence is EVFYLIRKQLSKKVSASSGDPQKYYGKELKIAKS. The helical transmembrane segment at 236–259 threads the bilayer; it reads LALILFLFALSWLPLHILNCITLF. Topologically, residues 260–267 are extracellular; it reads CPTCHKPT. A helical membrane pass occupies residues 268-292; that stretch reads ILTYIAIFLTHGNSAMNPIVYAFRI. Over 293-326 the chain is Cytoplasmic; that stretch reads QKFRVTFLKIWNDHFRCQPEPPIDEDLPEEKVDD. A lipid anchor (S-palmitoyl cysteine) is attached at Cys-309.

Belongs to the G-protein coupled receptor 1 family.

The protein localises to the cell membrane. In terms of biological role, receptor for adenosine. The activity of this receptor is mediated by G proteins which inhibit adenylyl cyclase. The sequence is that of Adenosine receptor A1 (ADORA1) from Cavia porcellus (Guinea pig).